The chain runs to 360 residues: Carbamoyl phosphate synthase small chain (360 aa).

Residues 1 to 169 (MTKRLLILED…TKTAYPAPGI (169 aa)) are CPSase. L-glutamine-binding residues include S46, G220, and G222. The Glutamine amidotransferase type-1 domain maps to 172–358 (NIVLVDFGLK…LEMIDSWRCT (187 aa)). Residue C247 is the Nucleophile of the active site. L-glutamine contacts are provided by M248, Q251, N289, G291, and Y292. Active-site residues include H331 and D333.

Belongs to the CarA family. As to quaternary structure, composed of two chains; the small (or glutamine) chain promotes the hydrolysis of glutamine to ammonia, which is used by the large (or ammonia) chain to synthesize carbamoyl phosphate. Tetramer of heterodimers (alpha,beta)4.

The enzyme catalyses hydrogencarbonate + L-glutamine + 2 ATP + H2O = carbamoyl phosphate + L-glutamate + 2 ADP + phosphate + 2 H(+). The catalysed reaction is L-glutamine + H2O = L-glutamate + NH4(+). It participates in amino-acid biosynthesis; L-arginine biosynthesis; carbamoyl phosphate from bicarbonate: step 1/1. The protein operates within pyrimidine metabolism; UMP biosynthesis via de novo pathway; (S)-dihydroorotate from bicarbonate: step 1/3. Functionally, small subunit of the glutamine-dependent carbamoyl phosphate synthetase (CPSase). CPSase catalyzes the formation of carbamoyl phosphate from the ammonia moiety of glutamine, carbonate, and phosphate donated by ATP, constituting the first step of 2 biosynthetic pathways, one leading to arginine and/or urea and the other to pyrimidine nucleotides. The small subunit (glutamine amidotransferase) binds and cleaves glutamine to supply the large subunit with the substrate ammonia. This is Carbamoyl phosphate synthase small chain from Streptococcus pyogenes serotype M18 (strain MGAS8232).